A 140-amino-acid chain; its full sequence is Nucleoside diphosphate kinase (140 aa).

Residues Lys-11, Phe-59, Arg-87, Thr-93, Arg-104, and Asn-114 each contribute to the ATP site. The Pros-phosphohistidine intermediate role is filled by His-117.

It belongs to the NDK family. As to quaternary structure, homotetramer. Mg(2+) is required as a cofactor.

The protein localises to the cytoplasm. It carries out the reaction a 2'-deoxyribonucleoside 5'-diphosphate + ATP = a 2'-deoxyribonucleoside 5'-triphosphate + ADP. The catalysed reaction is a ribonucleoside 5'-diphosphate + ATP = a ribonucleoside 5'-triphosphate + ADP. Functionally, major role in the synthesis of nucleoside triphosphates other than ATP. The ATP gamma phosphate is transferred to the NDP beta phosphate via a ping-pong mechanism, using a phosphorylated active-site intermediate. This Rhizobium rhizogenes (strain K84 / ATCC BAA-868) (Agrobacterium radiobacter) protein is Nucleoside diphosphate kinase.